The sequence spans 488 residues: Malonate-semialdehyde dehydrogenase (488 aa).

Residues alanine 150, phenylalanine 152, lysine 176, glutamate 179, arginine 180, serine 229, and threonine 251 each coordinate NAD(+). Catalysis depends on cysteine 284, which acts as the Nucleophile. NAD(+) is bound at residue glutamate 382.

This sequence belongs to the aldehyde dehydrogenase family. IolA subfamily. As to quaternary structure, homotetramer.

The enzyme catalyses 3-oxopropanoate + NAD(+) + CoA + H2O = hydrogencarbonate + acetyl-CoA + NADH + H(+). It catalyses the reaction 2-methyl-3-oxopropanoate + NAD(+) + CoA + H2O = propanoyl-CoA + hydrogencarbonate + NADH + H(+). It participates in polyol metabolism; myo-inositol degradation into acetyl-CoA; acetyl-CoA from myo-inositol: step 7/7. Catalyzes the oxidation of malonate semialdehyde (MSA) and methylmalonate semialdehyde (MMSA) into acetyl-CoA and propanoyl-CoA, respectively. Is involved in a myo-inositol catabolic pathway. Bicarbonate, and not CO2, is the end-product of the enzymatic reaction. The sequence is that of Malonate-semialdehyde dehydrogenase from Listeria monocytogenes serotype 4b (strain CLIP80459).